We begin with the raw amino-acid sequence, 98 residues long: Capsid assembly scaffolding protein (98 aa).

A coiled-coil region spans residues 40–62 (VSEYNDLTKSHEKLAAEKDDLIV).

Belongs to the phi29likevirus scaffolding protein family. Homodimer. Interacts non-specifically with DNA; probably binds DNA in the early stages of DNA packaging.

Scaffolding protein involved in the icosahedric procapsid assembly. Coassembles with the capsid proteins to form the procapsid. The scaffolding protein is found within the capsid as a serie of concentric shells. During DNA packaging, the scaffolding protein molecules are released from the procapsid. This is Capsid assembly scaffolding protein (7) from Bacillus subtilis (Bacteriophage phi-29).